A 329-amino-acid polypeptide reads, in one-letter code: Fructose-1,6-bisphosphatase class 1 (329 aa).

Residues Glu-84, Asp-103, Leu-105, and Asp-106 each contribute to the Mg(2+) site. Substrate-binding positions include 106–109, Asn-196, and Lys-262; that span reads DGSS. Glu-268 serves as a coordination point for Mg(2+).

The protein belongs to the FBPase class 1 family. Homotetramer. It depends on Mg(2+) as a cofactor.

Its subcellular location is the cytoplasm. It catalyses the reaction beta-D-fructose 1,6-bisphosphate + H2O = beta-D-fructose 6-phosphate + phosphate. It participates in carbohydrate biosynthesis; gluconeogenesis. The chain is Fructose-1,6-bisphosphatase class 1 from Shewanella pealeana (strain ATCC 700345 / ANG-SQ1).